The following is a 603-amino-acid chain: MNITTALPLPTHLLSEKVTAPLLGARKIYVTGSRQDIRVPMREIALTPSSARYGGNENLSLVLYDTSGIYTDPQATIDLACGLPRLRTAWIDERADTVEAKLHFKVPESVSVTAPPFPTPPQPLRARDNVAVTQLEYARRGLVTPEMEFVAIREQQRREQTVENLRGQRHAGDAWGALVGTPITPEFVRDEIARGRAILPNNINHPESEPMIIGRNFLTKINANIGTSALSSSIAEEVEKLVWAIRWGADTIMDLSTGRDIHATREWILRNSPVPVGTVPIYQALEKVDGHVDALSWDVFRDTLIEQAEQGVDYVTVHAGVLRDFIPLTASRLTGIVSRGGSIMARWCQAHRSENFLYTHFEELCEIMRAYDVAFSLGDGLRPGCIADANDAAQFAELEILGKLTHIAWNHQVQVMVEGPGHVPMQLIKANMDKQLAACGEAPFYTLGPLTTDIAPGYDHITSAIGAAMIGWYGTAMLCYVTPKEHLGLPNLQDVHDGIIAYKIAAHAADLAKGHPAAQARDDALSKARFEFRWQDQFHLSLDPEKALALHDESLPKEAHKRAAFCSMCGPQFCSMKISQEVRDASSSELSDANTDINTSDGI.

Substrate contacts are provided by residues N224, M253, Y282, H318, S338 to G340, D379 to R382, and E418. Zn(2+) is bound at residue H422. Residue Y445 participates in substrate binding. H486 is a binding site for Zn(2+). [4Fe-4S] cluster-binding residues include C566, C569, and C574.

Belongs to the ThiC family. As to quaternary structure, homodimer. Requires [4Fe-4S] cluster as cofactor.

It catalyses the reaction 5-amino-1-(5-phospho-beta-D-ribosyl)imidazole + S-adenosyl-L-methionine = 4-amino-2-methyl-5-(phosphooxymethyl)pyrimidine + CO + 5'-deoxyadenosine + formate + L-methionine + 3 H(+). Its pathway is cofactor biosynthesis; thiamine diphosphate biosynthesis. Functionally, catalyzes the synthesis of the hydroxymethylpyrimidine phosphate (HMP-P) moiety of thiamine from aminoimidazole ribotide (AIR) in a radical S-adenosyl-L-methionine (SAM)-dependent reaction. The protein is Phosphomethylpyrimidine synthase of Xylella fastidiosa (strain Temecula1 / ATCC 700964).